The primary structure comprises 858 residues: MQEQYNPQDIEHKVQQHWDNNKTFVVSEDPNKEKFYCLSMFPYPSGRLHMGHVRNYTIGDVVSRFQRLQGKNVLQPIGWDAFGLPAENAAVKNNTAPAPWTYENIEYMKNQLKLLGFGYDWNREFATCRPEYYRWEQEFFTKLFAKGLVYKKTSSVNWCPNDQTVLANEQVEDGCCWRCDTPVEQKEIPQWFIKITAYAQELLDDLDNLDGWPEMVKTMQRNWIGRSEGVELKFAVKGENTDLEVYTTRPDTLMGVTYVGIAAGHPLATKAAANNPALAAFIDECKNTKVAEAEIATMEKKGMATGLTAIHPLNGREVPIYIANFVLMDYGTGAVMAVPAHDQRDFEFATKYGLDIIPVIKPADGSELDVSEAAYTEKGVLFASGEFDGLDFQAAFNAIAAKLEAEGKGKKTVNFRLRDWGVSRQRYWGAPIPMVTTEDGQVHPVPADQLPVILPEDVVMDGVTSPIKADKEWAKTTFNGEPALRETDTFDTFMESSWYYARYCSPQADDILDPEKANYWLPVDQYIGGIEHACMHLLYSRFFYKLLRDAGYVKSDEPFKKLLCQGMVLADAFYYTNDKGGKEWVSPTEVKVERDGKGRIVSAVDATGRQVEHSGMIKMSKSKNNGIDPQEMVDKYGADTVRLFMMFASPADMTLEWQESGVEGANRFLRRVWKLVREHTELGQAPALDASALNADQKALRRDVHKTIAKVTDDVARRQTFNTAIAAIMELMNKLTKAPMTEAQDRAILDEALKAITLMLYPITPHICFEMWVALGQSNIDTASWPTYDEAALVEDEKLIVLQVNGKLRGKLTVAADATQQQVEALGMQDENVQKFIDGLTVRKVIYVPGKLLNIVAN.

Residues 42–52 (PYPSGRLHMGH) carry the 'HIGH' region motif. The 'KMSKS' region motif lies at 618-622 (KMSKS). Lysine 621 serves as a coordination point for ATP.

Belongs to the class-I aminoacyl-tRNA synthetase family.

It is found in the cytoplasm. It carries out the reaction tRNA(Leu) + L-leucine + ATP = L-leucyl-tRNA(Leu) + AMP + diphosphate. This Vibrio cholerae serotype O1 (strain ATCC 39541 / Classical Ogawa 395 / O395) protein is Leucine--tRNA ligase.